The chain runs to 266 residues: Indole-3-glycerol phosphate synthase (266 aa).

This sequence belongs to the TrpC family.

The catalysed reaction is 1-(2-carboxyphenylamino)-1-deoxy-D-ribulose 5-phosphate + H(+) = (1S,2R)-1-C-(indol-3-yl)glycerol 3-phosphate + CO2 + H2O. The protein operates within amino-acid biosynthesis; L-tryptophan biosynthesis; L-tryptophan from chorismate: step 4/5. The chain is Indole-3-glycerol phosphate synthase from Acidovorax sp. (strain JS42).